A 209-amino-acid chain; its full sequence is Orotate phosphoribosyltransferase (209 aa).

5-phospho-alpha-D-ribose 1-diphosphate contacts are provided by residues arginine 96, lysine 100, histidine 102, and 122-130 (EDLISTGGS). Position 126 (serine 126) interacts with orotate.

It belongs to the purine/pyrimidine phosphoribosyltransferase family. PyrE subfamily. Homodimer. It depends on Mg(2+) as a cofactor.

It catalyses the reaction orotidine 5'-phosphate + diphosphate = orotate + 5-phospho-alpha-D-ribose 1-diphosphate. It participates in pyrimidine metabolism; UMP biosynthesis via de novo pathway; UMP from orotate: step 1/2. In terms of biological role, catalyzes the transfer of a ribosyl phosphate group from 5-phosphoribose 1-diphosphate to orotate, leading to the formation of orotidine monophosphate (OMP). This is Orotate phosphoribosyltransferase from Streptococcus pyogenes serotype M12 (strain MGAS2096).